The sequence spans 93 residues: Ribonuclease P protein component 1 (93 aa).

Belongs to the eukaryotic/archaeal RNase P protein component 1 family. As to quaternary structure, consists of a catalytic RNA component and at least 4-5 protein subunits.

It is found in the cytoplasm. It carries out the reaction Endonucleolytic cleavage of RNA, removing 5'-extranucleotides from tRNA precursor.. Functionally, part of ribonuclease P, a protein complex that generates mature tRNA molecules by cleaving their 5'-ends. In Methanosphaera stadtmanae (strain ATCC 43021 / DSM 3091 / JCM 11832 / MCB-3), this protein is Ribonuclease P protein component 1.